The sequence spans 1336 residues: MTLDRPGEGATMLKTFTVLLFCIRMSLGMTSIVMDPQPELWIESNYPQAPWENITLWCRSPSRISSKFLLLKDKTQMTWIRPSHKTFQVSFLIGALTESNAGLYRCCYWKETGWSKPSKVLELEAPGQLPKPIFWIQAETPALPGCNVNILCHGWLQDLVFMLFKEGYAEPVDYQVPTGTMAIFSIDNLTPEDEGVYICRTHIQMLPTLWSEPSNPLKLVVAGLYPKPTLTAHPGPIMAPGESLNLRCQGPIYGMTFALMRVEDLEKSFYHKKTIKNEANFFFQSLKIQDTGHYLCFYYDASYRGSLLSDVLKIWVTDTFPKTWLLARPSAVVQMGQNVSLRCRGPVDGVGLALYKKGEDKPLQFLDATSIDDNTSFFLNNVTYSDTGIYSCHYLLTWKTSIRMPSHNTVELMVVDKPPKPSLSAWPSTVFKLGKAITLQCRVSHPVLEFSLEWEERETFQKFSVNGDFIISNVDGKGTGTYSCSYRVETHPNIWSHRSEPLKLMGPAGYLTWNYVLNEAIRLSLIMQLVALLLVVLWIRWKCRRLRIREAWLLGTAQGVTMLFIVTALLCCGLCNGVLIEETEIVMPTPKPELWAETNFPLAPWKNLTLWCRSPSGSTKEFVLLKDGTGWIATRPASEQVRAAFPLGALTQSHTGSYHCHSWEEMAVSEPSEALELVGTDILPKPVISASPTIRGQELQLRCKGWLAGMGFALYKEGEQEPVQQLGAVGREAFFTIQRMEDKDEGNYSCRTHTEKRPFKWSEPSEPLELVIKEMYPKPFFKTWASPVVTPGARVTFNCSTPHQHMSFILYKDGSEIASSDRSWASPGASAAHFLIISVGIGDGGNYSCRYYDFSIWSEPSDPVELVVTEFYPKPTLLAQPGPVVFPGKSVILRCQGTFQGMRFALLQEGAHVPLQFRSVSGNSADFLLHTVGAEDSGNYSCIYYETTMSNRGSYLSMPLMIWVTDTFPKPWLFAEPSSVVPMGQNVTLWCRGPVHGVGYILHKEGEATSMQLWGSTSNDGAFPITNISGTSMGRYSCCYHPDWTSSIKIQPSNTLELLVTGLLPKPSLLAQPGPMVAPGENMTLQCQGELPDSTFVLLKEGAQEPLEQQRPSGYRADFWMPAVRGEDSGIYSCVYYLDSTPFAASNHSDSLEIWVTDKPPKPSLSAWPSTMFKLGKDITLQCRGPLPGVEFVLEHDGEEAPQQFSEDGDFVINNVEGKGIGNYSCSYRLQAYPDIWSEPSDPLELVGAAGPVAQECTVGNIVRSSLIVVVVVALGVVLAIEWKKWPRLRTRGSETDGRDQTIALEECNQEGEPGTPANSPSSTSQRISVELPVPI.

The N-terminal stretch at 1–28 (MTLDRPGEGATMLKTFTVLLFCIRMSLG) is a signal peptide. Over 29–518 (MTSIVMDPQP…GYLTWNYVLN (490 aa)) the chain is Extracellular. Ig-like C2-type domains follow at residues 38–122 (PELW…KVLE), 137–222 (QAET…LVVA), 226–312 (PKPT…SDVL), 321–408 (PKTW…PSHN), and 419–500 (PKPS…HRSE). Asparagine 53 carries an N-linked (GlcNAc...) asparagine glycan. Cysteine 58 and cysteine 106 form a disulfide bridge. Cysteine 248 and cysteine 296 form a disulfide bridge. 3 N-linked (GlcNAc...) asparagine glycosylation sites follow: asparagine 338, asparagine 374, and asparagine 381. Intrachain disulfides connect cysteine 343–cysteine 392 and cysteine 441–cysteine 484. A helical transmembrane segment spans residues 519-539 (EAIRLSLIMQLVALLLVVLWI). Residues 540–559 (RWKCRRLRIREAWLLGTAQG) are Cytoplasmic-facing. The helical transmembrane segment at 560–580 (VTMLFIVTALLCCGLCNGVLI) threads the bilayer. At 581-1336 (EETEIVMPTP…RISVELPVPI (756 aa)) the chain is on the extracellular side. Ig-like C2-type domains are found at residues 589–677 (TPKP…ALEL), 686–760 (PVIS…RPFK), 777–869 (PKPF…LVVT), 873–958 (PKPT…YLSM), 965–1060 (TDTF…ELLV), 1065–1150 (PKPS…NHSD), and 1161–1242 (PKPS…EPSD). N-linked (GlcNAc...) asparagine glycans are attached at residues asparagine 607, asparagine 747, asparagine 798, asparagine 846, asparagine 939, asparagine 986, asparagine 1027, and asparagine 1082. Cysteine 703 and cysteine 750 are joined by a disulfide. 2 disulfide bridges follow: cysteine 799–cysteine 849 and cysteine 895–cysteine 942. Cysteines 1087 and 1134 form a disulfide. 2 N-linked (GlcNAc...) asparagine glycosylation sites follow: asparagine 1147 and asparagine 1223. The cysteines at positions 1183 and 1226 are disulfide-linked. Positions 1308–1336 (CNQEGEPGTPANSPSSTSQRISVELPVPI) are disordered. The segment covering 1317–1328 (PANSPSSTSQRI) has biased composition (polar residues).

In terms of assembly, interacts with INHA. In PubMed:12385827 does not interact with INHA; standard receptor binding assay. Interacts with ACVR1B; the interaction appears to be ligand-dependent as it is diminished by inhibin B and activin A. Interacts with ACVR2A, ACVR2B, ACVRL1 and BMPR1B. Interacts with HECTD1. As to expression, highly expressed in pancreas, testis and fetal liver. Moderately expressed in heart, prostate and small intestine. Expressed at very low levels in brain, thymus, ovary, colon, fetal lung and fetal kidney. Expressed in muscle. Isoform 3 is expressed in pituitary gland.

It is found in the membrane. Its subcellular location is the secreted. Seems to be a coreceptor in inhibin signaling, but seems not to be a high-affinity inhibin receptor. Antagonizes activin A signaling in the presence or absence of inhibin B. Necessary to mediate a specific antagonistic effect of inhibin B on activin-stimulated transcription. This is Immunoglobulin superfamily member 1 (IGSF1) from Homo sapiens (Human).